The sequence spans 910 residues: Short transient receptor potential channel 3 (910 aa).

Positions Met1–Ala93 are disordered. Over Met1–Phe448 the chain is Cytoplasmic. Residues Pro19–Gly29 are compositionally biased toward acidic residues. Over residues Pro48–Gly58 the composition is skewed to pro residues. The span at Pro59–Ser68 shows a compositional bias: low complexity. ANK repeat units lie at residues Ala100 to Val129, Met135 to Ile164, Asp166 to Ser192, and Pro221 to Arg250. Ca(2+) is bound at residue Glu147. Residues Val449–Ala466 form a helical membrane-spanning segment. Residues Ser467–Thr497 lie on the Extracellular side of the membrane. Asn478 carries N-linked (GlcNAc...) asparagine glycosylation. A helical transmembrane segment spans residues Trp498–Lys516. Ca(2+) is bound by residues Glu514, Glu517, and Asn532. Over Glu517–Gln529 the chain is Cytoplasmic. A helical transmembrane segment spans residues Leu530–Leu551. Over Ala552–Asp595 the chain is Extracellular. The helical transmembrane segment at Pro596–Leu619 threads the bilayer. The Cytoplasmic segment spans residues Pro620–Asp638. The ANK 5 repeat unit spans residues Glu623 to Ala652. A helical transmembrane segment spans residues Ile639–Ser662. Residues Tyr663 to His702 are Extracellular-facing. The helical transmembrane segment at Lys703–Leu728 threads the bilayer. Residues Ile729–Glu910 are Cytoplasmic-facing. 4 residues coordinate Ca(2+): Glu860, Glu863, Glu865, and Asp872.

It belongs to the transient receptor (TC 1.A.4) family. STrpC subfamily. TRPC3 sub-subfamily. In terms of assembly, homotetramer. Interacts with ITPR1, ITPR3, MX1 and RNF24. Interacts with JPH2; the interaction is involved in maintaining Ca(2+) homeostasis in skeletal muscle and is mediated by JPH2 'Ser-165' phosphorylation. As to expression, abundantly expressed in brain. Concentrated in cerebellar Purkinje cells and sparsely localized in cerebellar granule lyer, pontine nuclei and thalamus. Lower levels detected in other tissues.

Its subcellular location is the cell membrane. The enzyme catalyses Ca(2+)(in) = Ca(2+)(out). With respect to regulation, activated by diacylglycerol (DAG) in a membrane-delimited fashion, independently of protein kinase C. Activated by inositol 1,4,5-triphosphate receptors (ITPR) with bound IP3. May be activated by internal calcium store depletion. Inhibited by intracellular Ca(2+). Its function is as follows. Forms a receptor-activated non-selective calcium permeant cation channel. May be operated by a phosphatidylinositol second messenger system activated by receptor tyrosine kinases or G-protein coupled receptors. The chain is Short transient receptor potential channel 3 (Trpc3) from Mus musculus (Mouse).